Consider the following 585-residue polypeptide: Arginine--tRNA ligase (585 aa).

The short motif at 130–140 (ANPTGPMHVGH) is the 'HIGH' region element.

This sequence belongs to the class-I aminoacyl-tRNA synthetase family. In terms of assembly, monomer.

The protein resides in the cytoplasm. It carries out the reaction tRNA(Arg) + L-arginine + ATP = L-arginyl-tRNA(Arg) + AMP + diphosphate. The chain is Arginine--tRNA ligase from Methylorubrum extorquens (strain PA1) (Methylobacterium extorquens).